A 152-amino-acid polypeptide reads, in one-letter code: Small ribosomal subunit protein uS15 (152 aa).

Positions 1 to 11 (MARMHARRRGK) are enriched in basic residues. Positions 1 to 25 (MARMHARRRGKSSSVRPARNEAPAW) are disordered.

The protein belongs to the universal ribosomal protein uS15 family. Part of the 30S ribosomal subunit.

The polypeptide is Small ribosomal subunit protein uS15 (Methanoregula boonei (strain DSM 21154 / JCM 14090 / 6A8)).